We begin with the raw amino-acid sequence, 95 residues long: Suppressor of silencing 2b (95 aa).

A homotetramerization region spans residues 8-18 (LHEIIRKLERM). Residues 8 to 40 (LHEIIRKLERMNQKKQAQRKRHKLNRKERGHKS) are a coiled coil. A disordered region spans residues 16-49 (ERMNQKKQAQRKRHKLNRKERGHKSPSEQRRSEL). Residues 23 to 37 (QAQRKRHKLNRKERG) show a composition bias toward basic residues. Residues 26 to 30 (RKRHK) carry the Nuclear localization signal motif. Positions 38–49 (HKSPSEQRRSEL) are enriched in basic and acidic residues.

Belongs to the cucumovirus/ilarvirus protein 2b family. In terms of assembly, homodimer. Homotetramer (dimer of dimers).

The protein localises to the host nucleus. Acts as a suppressor of RNA-mediated gene silencing, also known as post-transcriptional gene silencing (PTGS), a mechanism of plant viral defense that limits the accumulation of viral RNAs. Forms a homodimer to measure siRNA duplex in a length-preference mode. Binds to both siRNA duplexes (19bp) and long siRNA duplexes (30bp). The chain is Suppressor of silencing 2b from Canna (Florist's daisy).